Consider the following 274-residue polypeptide: Large ribosomal subunit protein uL2 (274 aa).

The segment at 220–259 (VRGAAMNPRDHPHGGGEGRAPRGMSTPKTKWGKPARGVKT) is disordered. Positions 227–239 (PRDHPHGGGEGRA) are enriched in basic and acidic residues. A compositionally biased stretch (basic residues) spans 249–259 (KWGKPARGVKT).

It belongs to the universal ribosomal protein uL2 family. As to quaternary structure, part of the 50S ribosomal subunit. Forms a bridge to the 30S subunit in the 70S ribosome.

One of the primary rRNA binding proteins. Required for association of the 30S and 50S subunits to form the 70S ribosome, for tRNA binding and peptide bond formation. It has been suggested to have peptidyltransferase activity; this is somewhat controversial. Makes several contacts with the 16S rRNA in the 70S ribosome. In Chloroflexus aggregans (strain MD-66 / DSM 9485), this protein is Large ribosomal subunit protein uL2.